The chain runs to 334 residues: Sulfhydrogenase 2 subunit beta (334 aa).

4Fe-4S ferredoxin-type domains follow at residues 220–250 and 294–328; these read KVWKKYAEKCLGCGNCTIVCPTCRCYEVCDT and CKNYFDPEAGFNCVGCGRCDEFCPARIEHVKVLDE. Residues cysteine 229, cysteine 232, cysteine 235, cysteine 239, cysteine 306, cysteine 309, cysteine 312, and cysteine 316 each coordinate [4Fe-4S] cluster.

As to quaternary structure, dimer of heterotetramer of alpha, beta, gamma and delta subunits. The nickel-containing alpha and delta subunits constitute the hydrogenase activity. The beta and gamma subunits (flavin-containing dimer) constitute the sulfur reductase activity. The cofactor is [4Fe-4S] cluster.

It localises to the cytoplasm. The catalysed reaction is n sulfur + H2 = (n-1) sulfur + hydrogen sulfide + H(+). Its function is as follows. Part of a bifunctional enzyme complex that functions as a hydrogen-evolving hydrogenase with sulfur-reducing activity. May play a role in hydrogen cycling during fermentative growth. Activity exhibited with NAD in addition to NADPH. The beta and gamma subunits form the sulfur-reducing component that catalyzes the cytoplasmic production of hydrogen sulfide in the presence of elemental sulfur. This chain is Sulfhydrogenase 2 subunit beta, found in Pyrococcus furiosus (strain ATCC 43587 / DSM 3638 / JCM 8422 / Vc1).